Here is a 244-residue protein sequence, read N- to C-terminus: Phosphoadenosine 5'-phosphosulfate reductase (244 aa).

Catalysis depends on C239, which acts as the Nucleophile; cysteine thiosulfonate intermediate.

The protein belongs to the PAPS reductase family. CysH subfamily.

It localises to the cytoplasm. It catalyses the reaction [thioredoxin]-disulfide + sulfite + adenosine 3',5'-bisphosphate + 2 H(+) = [thioredoxin]-dithiol + 3'-phosphoadenylyl sulfate. Its pathway is sulfur metabolism; hydrogen sulfide biosynthesis; sulfite from sulfate: step 3/3. Functionally, catalyzes the formation of sulfite from phosphoadenosine 5'-phosphosulfate (PAPS) using thioredoxin as an electron donor. The chain is Phosphoadenosine 5'-phosphosulfate reductase from Escherichia coli O81 (strain ED1a).